A 922-amino-acid polypeptide reads, in one-letter code: ATP-dependent helicase fft3 (922 aa).

Disordered regions lie at residues 139–177 (EPKM…APHR) and 198–224 (PLSS…DDSN). Residues 153–166 (DSLPLSLSSQSLSS) are compositionally biased toward low complexity. Residues 207-223 (PEADDDSNDDMYSDDDS) show a composition bias toward acidic residues. Residues Ser-213 and Ser-219 each carry the phosphoserine modification. Residues 399 to 567 (YLLYELKLAG…ISLLAFILPH (169 aa)) enclose the Helicase ATP-binding domain. 412-419 (DEMGLGKT) contributes to the ATP binding site. The DEGH box motif lies at 518–521 (DEGH). Residue Ser-617 is modified to Phosphoserine. The Helicase C-terminal domain occupies 765–922 (KLKKLLTNAV…ETVEAEDDDD (158 aa)).

Belongs to the SNF2/RAD54 helicase family. In terms of assembly, interacts with the GDP-bound form of spi1.

It is found in the nucleus. The protein localises to the chromosome. It catalyses the reaction ATP + H2O = ADP + phosphate + H(+). DNA helicase that possesses intrinsic ATP-dependent nucleosome-remodeling activity and is required for heterochromatin organization. Required for maintaining a heterochromatin chromatin structure at centromeres and subtelomeres by protecting these regions from euchromatin assembly. Enhances the nucleotide exchange activity of the pim1 guanine nucleotide exchange factor and abolishes histone-H3-mediated RanGAP inhibition. Involved in the construction of the centromeres. The polypeptide is ATP-dependent helicase fft3 (fft3) (Schizosaccharomyces pombe (strain 972 / ATCC 24843) (Fission yeast)).